The sequence spans 459 residues: Spermatogenesis-associated protein 1 (459 aa).

A compositionally biased stretch (basic and acidic residues) spans 193–205 (LKELPNKNQEEAG). The segment at 193-213 (LKELPNKNQEEAGGKATAEKS) is disordered. 2 coiled-coil regions span residues 287–374 (TDIS…YKKL) and 400–453 (LIIQ…KKII).

Interacts with IFT20.

It is found in the cytoplasmic vesicle. The protein resides in the secretory vesicle. It localises to the acrosome. The sequence is that of Spermatogenesis-associated protein 1 (SPATA1) from Homo sapiens (Human).